Reading from the N-terminus, the 368-residue chain is Cobalt-precorrin-5B C(1)-methyltransferase (368 aa).

The protein belongs to the CbiD family.

It carries out the reaction Co-precorrin-5B + S-adenosyl-L-methionine = Co-precorrin-6A + S-adenosyl-L-homocysteine. It functions in the pathway cofactor biosynthesis; adenosylcobalamin biosynthesis; cob(II)yrinate a,c-diamide from sirohydrochlorin (anaerobic route): step 6/10. Functionally, catalyzes the methylation of C-1 in cobalt-precorrin-5B to form cobalt-precorrin-6A. The protein is Cobalt-precorrin-5B C(1)-methyltransferase of Brucella anthropi (strain ATCC 49188 / DSM 6882 / CCUG 24695 / JCM 21032 / LMG 3331 / NBRC 15819 / NCTC 12168 / Alc 37) (Ochrobactrum anthropi).